A 740-amino-acid chain; its full sequence is Copalyl diphosphate synthase 2 (740 aa).

Substrate is bound at residue Lys-154. Positions 287 and 289 each coordinate Mg(2+). A DXDD motif motif is present at residues 287–290; it reads DADD. Position 373 (Lys-373) interacts with substrate.

This sequence belongs to the terpene synthase family. Mg(2+) is required as a cofactor.

The enzyme catalyses (2E,6E,10E)-geranylgeranyl diphosphate = (+)-copalyl diphosphate. It participates in secondary metabolite biosynthesis; terpenoid biosynthesis. In terms of biological role, monofunctional diterpene synthase converting geranylgeranyl diphosphate to copalyl diphosphate. The chain is Copalyl diphosphate synthase 2 (CPS2) from Selaginella moellendorffii (Spikemoss).